The sequence spans 141 residues: Hemoglobin subunit alpha (141 aa).

The Globin domain occupies V1–R141. S3 carries the phosphoserine modification. K7 bears the N6-succinyllysine mark. T8 bears the Phosphothreonine mark. K11 is modified (N6-succinyllysine). N6-acetyllysine; alternate is present on K16. K16 is modified (N6-succinyllysine; alternate). Y24 is subject to Phosphotyrosine. S35 bears the Phosphoserine mark. Position 40 is an N6-succinyllysine (K40). S49 is modified (phosphoserine). Residue H58 participates in O2 binding. H87 is a heme b binding site. Phosphoserine is present on S102. T108 carries the phosphothreonine modification. Residues S124 and S131 each carry the phosphoserine modification. 2 positions are modified to phosphothreonine: T134 and T137. Phosphoserine is present on S138.

The protein belongs to the globin family. As to quaternary structure, heterotetramer of two alpha chains and two beta chains. In terms of tissue distribution, red blood cells.

Its function is as follows. Involved in oxygen transport from the lung to the various peripheral tissues. This is Hemoglobin subunit alpha from Otospermophilus beecheyi (California ground squirrel).